Here is a 212-residue protein sequence, read N- to C-terminus: Ribosomal RNA small subunit methyltransferase G (212 aa).

S-adenosyl-L-methionine is bound by residues Gly72, Leu77, 123–124 (VE), and Arg138.

This sequence belongs to the methyltransferase superfamily. RNA methyltransferase RsmG family.

Its subcellular location is the cytoplasm. It carries out the reaction guanosine(527) in 16S rRNA + S-adenosyl-L-methionine = N(7)-methylguanosine(527) in 16S rRNA + S-adenosyl-L-homocysteine. Its function is as follows. Specifically methylates the N7 position of guanine in position 527 of 16S rRNA. The chain is Ribosomal RNA small subunit methyltransferase G from Histophilus somni (strain 2336) (Haemophilus somnus).